Consider the following 456-residue polypeptide: UDP-N-acetylglucosamine 1-carboxyvinyltransferase (456 aa).

34–35 (KN) serves as a coordination point for phosphoenolpyruvate. Arg104 contributes to the UDP-N-acetyl-alpha-D-glucosamine binding site. The Proton donor role is filled by Cys128. Cys128 carries the 2-(S-cysteinyl)pyruvic acid O-phosphothioketal modification. UDP-N-acetyl-alpha-D-glucosamine contacts are provided by Asp319 and Ile341.

It belongs to the EPSP synthase family. MurA subfamily.

The protein resides in the cytoplasm. It carries out the reaction phosphoenolpyruvate + UDP-N-acetyl-alpha-D-glucosamine = UDP-N-acetyl-3-O-(1-carboxyvinyl)-alpha-D-glucosamine + phosphate. It functions in the pathway cell wall biogenesis; peptidoglycan biosynthesis. Its function is as follows. Cell wall formation. Adds enolpyruvyl to UDP-N-acetylglucosamine. This chain is UDP-N-acetylglucosamine 1-carboxyvinyltransferase, found in Prochlorococcus marinus (strain MIT 9301).